The primary structure comprises 125 residues: MORF4 family-associated protein 1 (125 aa).

The disordered stretch occupies residues 76-99 (ESALNHLQGAGGAEPRGPRAEKAD). Positions 94–124 (RAEKADEKAQEMAKMAEMLVQLVRRIEKSES) form a coiled coil.

Belongs to the MORF4 family-associated protein family. Found in a complex composed of MORF4L1, MRFAP1 and RB1. Interacts via its N-terminus with MORF4L1. Interacts with CSTB and MORF4L2. In terms of tissue distribution, widely expressed in all tissues examined and as early as 7 days during embryonic development.

It is found in the nucleus. It localises to the cytoplasm. The protein resides in the perinuclear region. This Mus musculus (Mouse) protein is MORF4 family-associated protein 1.